The sequence spans 578 residues: ATP-dependent RNA helicase dbp3 (578 aa).

Residues 59 to 69 (KRSADEEASVK) show a composition bias toward basic and acidic residues. Residues 59–117 (KRSADEEASVKRKEKKSKHEHKKHKKDKPSADKDRISKKDKKKSKKGKSKTKEESIEIN) are disordered. Over residues 70-85 (RKEKKSKHEHKKHKKD) the composition is skewed to basic residues. The span at 86 to 95 (KPSADKDRIS) shows a compositional bias: basic and acidic residues. Residues 96 to 107 (KKDKKKSKKGKS) show a composition bias toward basic residues. A Q motif motif is present at residues 167–193 (LQFDELDVSAKLREGLKNYKEPTPIQA). Positions 196–373 (WPYLLAGRDV…ATFLKDPVKI (178 aa)) constitute a Helicase ATP-binding domain. 209 to 216 (AETGSGKT) lines the ATP pocket. The DEAD box motif lies at 316–319 (DEAD). The 149-residue stretch at 402–550 (MLDNLLRKHL…DIPEGLFKFG (149 aa)) folds into the Helicase C-terminal domain.

The protein belongs to the DEAD box helicase family. DDX5/DBP2 subfamily.

Its subcellular location is the nucleus. It localises to the nucleolus. The enzyme catalyses ATP + H2O = ADP + phosphate + H(+). In terms of biological role, ATP-dependent RNA helicase required for 60S ribosomal subunit synthesis. Involved in efficient pre-rRNA processing, predominantly at site A3, which is necessary for the normal formation of 25S and 5.8S rRNAs. This chain is ATP-dependent RNA helicase dbp3 (dbp3), found in Schizosaccharomyces pombe (strain 972 / ATCC 24843) (Fission yeast).